A 185-amino-acid polypeptide reads, in one-letter code: Ribosome-recycling factor (185 aa).

Belongs to the RRF family.

Its subcellular location is the cytoplasm. Its function is as follows. Responsible for the release of ribosomes from messenger RNA at the termination of protein biosynthesis. May increase the efficiency of translation by recycling ribosomes from one round of translation to another. The sequence is that of Ribosome-recycling factor from Syntrophus aciditrophicus (strain SB).